Here is a 540-residue protein sequence, read N- to C-terminus: MATVTRLCVTKSVPTVNGQFPGPKLVVREGDTLVIRVTNNINNNVTFHWHGIRQVRSGWADGPAYITQCPIRSGGSYVYRFTVTGQRGTLWWHAHFSWLRATLYGPLVILPPRGVAYPFPKPHREVPLLLGEWFNADPEAVIKQALQTGGGPNVSDAYTFNGLPGPTYNCSSSNDTFKLRVRPGKTYLLRLINAALNDELFFGVANHTLMVVQADASYVKPFAATALVISPGQTMDVLLTAAANNPPSRSFAIAVAPYTNTVGTFDNTTAVAVLEYYGAATSAAALRSLPLPSLPAYNDTGAVANFSASFRSLASAQYPARVPRTVDRHFFFAVGLGADPCQSPVNGTCQGPNNTRFAASMNNVSFVMPRTSLLQAHYQRRYNGVLAANFPAAPRTPFNYTGTPPNNTFVTHGTRVVPLSFNTTVEVVLQDTSILGAESHPLHLHGYDFYVVGTGFGNYDASNDTAKYNLVDPVQRNTISVPTAGWVAIRFVADNPGVWIMHCHLDVHLSWGLSMAWLVNDGPLPNQKLPPPPSDIPMCS.

Plastocyanin-like domains lie at 1–114, 124–279, and 389–523; these read MATV…PPRG, REVP…YYGA, and NFPA…NDGP. Positions 48, 50, 93, and 95 each coordinate Cu cation. Cu cation-binding residues include H440, H443, H445, H502, C503, H504, and H508.

Belongs to the multicopper oxidase family. Requires Cu cation as cofactor.

Its subcellular location is the secreted. The protein resides in the extracellular space. It is found in the apoplast. The enzyme catalyses 4 hydroquinone + O2 = 4 benzosemiquinone + 2 H2O. Lignin degradation and detoxification of lignin-derived products. The polypeptide is Putative laccase-11 (LAC11) (Oryza sativa subsp. japonica (Rice)).